The chain runs to 346 residues: D-alanine--D-alanine ligase (346 aa).

The ATP-grasp domain occupies 133 to 327 (KLYAKSVGVK…ALADQISLEK (195 aa)). 159–211 (LSFPCIIKPARLGSSIGISIVKDEKDLEYAKDVGFEFDNDLVVEEFKNNIKEY) is a binding site for ATP. 3 residues coordinate Mg(2+): Asp-284, Glu-296, and Asn-298.

This sequence belongs to the D-alanine--D-alanine ligase family. Requires Mg(2+) as cofactor. Mn(2+) serves as cofactor.

The protein resides in the cytoplasm. The enzyme catalyses 2 D-alanine + ATP = D-alanyl-D-alanine + ADP + phosphate + H(+). The protein operates within cell wall biogenesis; peptidoglycan biosynthesis. Cell wall formation. This Campylobacter jejuni subsp. jejuni serotype O:6 (strain 81116 / NCTC 11828) protein is D-alanine--D-alanine ligase.